The following is an 884-amino-acid chain: Protein P (884 aa).

Residues 1-184 form a terminal protein domain (TP) region; the sequence is MHPFSRLFRN…GKPYSWEHRQ (184 aa). The segment at 185 to 387 is spacer; it reads LVQHNGQQHK…YCIHHIVSSL (203 aa). Disordered stretches follow at residues 218 to 241 and 299 to 345; these read PSEP…QKST and RNSG…DFSS. Composition is skewed to polar residues over residues 222–241 and 323–332; these read VSVS…QKST and YSSNSTSQRY. A polymerase/reverse transcriptase domain (RT) region spans residues 388–729; sequence DDWGPCTVTG…YEELWPVVRQ (342 aa). The Reverse transcriptase domain occupies 398–639; sequence DVTIKSPRTP…NHLHFMGYVI (242 aa). The Mg(2+) site is built by Asp-470, Asp-590, and Asp-591.

The protein belongs to the hepadnaviridae P protein family.

The enzyme catalyses DNA(n) + a 2'-deoxyribonucleoside 5'-triphosphate = DNA(n+1) + diphosphate. It catalyses the reaction Endonucleolytic cleavage to 5'-phosphomonoester.. Activated by host HSP70 and HSP40 in vitro to be able to bind the epsilon loop of the pgRNA. Because deletion of the RNase H region renders the protein partly chaperone-independent, the chaperones may be needed indirectly to relieve occlusion of the RNA-binding site by this domain. Inhibited by several reverse-transcriptase inhibitors: Lamivudine, Adefovir and Entecavir. Its function is as follows. Multifunctional enzyme that converts the viral RNA genome into dsDNA in viral cytoplasmic capsids. This enzyme displays a DNA polymerase activity that can copy either DNA or RNA templates, and a ribonuclease H (RNase H) activity that cleaves the RNA strand of RNA-DNA heteroduplexes in a partially processive 3'- to 5'-endonucleasic mode. Neo-synthesized pregenomic RNA (pgRNA) are encapsidated together with the P protein, and reverse-transcribed inside the nucleocapsid. Initiation of reverse-transcription occurs first by binding the epsilon loop on the pgRNA genome, and is initiated by protein priming, thereby the 5'-end of (-)DNA is covalently linked to P protein. Partial (+)DNA is synthesized from the (-)DNA template and generates the relaxed circular DNA (RC-DNA) genome. After budding and infection, the RC-DNA migrates in the nucleus, and is converted into a plasmid-like covalently closed circular DNA (cccDNA). The activity of P protein does not seem to be necessary for cccDNA generation, and is presumably released from (+)DNA by host nuclear DNA repair machinery. The chain is Protein P from Marmota monax (Woodchuck).